The following is a 246-amino-acid chain: MALLRGVWGVLSALGKSGADLCAVCGSRLRSPFSFAYVPRWFSSTLSGFPKKPMTSYVRFSKEQLPIFKAQNPDAKNSELIKKIAELWRELPDSEKKIYEDAYRADWQVYKEEVNRIQEQLTPSQMVSLEKEIMQKRLKKKALIKKRELTMLGKPKRPRSAYNIFIAERFQEAKDGPSQVKLKTINENWKNLSSSQKQVYIQLAEDDKVRYYNEMKSWEEQMVEVGRNDLIRRSMKHSAKKDTEEC.

A mitochondrion-targeting transit peptide spans 1-42; that stretch reads MALLRGVWGVLSALGKSGADLCAVCGSRLRSPFSFAYVPRWF. Residues 50 to 118 constitute a DNA-binding region (HMG box 1); it reads PKKPMTSYVR…VYKEEVNRIQ (69 aa). Residues serine 56 and serine 61 each carry the phosphoserine; by PKA modification. A Phosphothreonine modification is found at threonine 122. The segment at residues 155-219 is a DNA-binding region (HMG box 2); the sequence is PKRPRSAYNI…RYYNEMKSWE (65 aa). Serine 160 is modified (phosphoserine; by PKA). A phosphoserine mark is found at serine 193 and serine 195.

Monomer; binds DNA as a monomer. Homodimer. Component of the mitochondrial transcription initiation complex, composed at least of TFB2M, TFAM and POLRMT. In this complex TFAM recruits POLRMT to the promoter whereas TFB2M induces structural changes in POLRMT to enable promoter opening and trapping of the DNA non-template strand. Upon metabolic stress, forms a complex composed of FOXO3, SIRT3, TFAM and POLRMT. Interacts with TFB1M and TFB2M. Interacts with CLPX; this enhances DNA-binding. Phosphorylation by PKA within the HMG box 1 impairs DNA binding and promotes degradation by the AAA+ Lon protease.

It localises to the mitochondrion. It is found in the mitochondrion matrix. Its subcellular location is the mitochondrion nucleoid. Its function is as follows. Binds to the mitochondrial light strand promoter and functions in mitochondrial transcription regulation. Component of the mitochondrial transcription initiation complex, composed at least of TFB2M, TFAM and POLRMT that is required for basal transcription of mitochondrial DNA. In this complex, TFAM recruits POLRMT to a specific promoter whereas TFB2M induces structural changes in POLRMT to enable promoter opening and trapping of the DNA non-template strand. Required for accurate and efficient promoter recognition by the mitochondrial RNA polymerase. Promotes transcription initiation from the HSP1 and the light strand promoter by binding immediately upstream of transcriptional start sites. Is able to unwind DNA. Bends the mitochondrial light strand promoter DNA into a U-turn shape via its HMG boxes. Required for maintenance of normal levels of mitochondrial DNA. May play a role in organizing and compacting mitochondrial DNA. The polypeptide is Transcription factor A, mitochondrial (Sus scrofa (Pig)).